A 199-amino-acid chain; its full sequence is NAD(P)H dehydrogenase (quinone) (199 aa).

Residues 4–190 (VLVLYYSAYG…AGARYQGRRV (187 aa)) enclose the Flavodoxin-like domain. FMN is bound by residues 10–15 (SAYGHI) and 78–80 (TRF). Tyr12 lines the NAD(+) pocket. Trp98 contributes to the substrate binding site. FMN is bound by residues 113–119 (STATQHG) and His134.

Belongs to the WrbA family. FMN is required as a cofactor.

It catalyses the reaction a quinone + NADH + H(+) = a quinol + NAD(+). It carries out the reaction a quinone + NADPH + H(+) = a quinol + NADP(+). The protein is NAD(P)H dehydrogenase (quinone) of Methylocella silvestris (strain DSM 15510 / CIP 108128 / LMG 27833 / NCIMB 13906 / BL2).